Here is a 275-residue protein sequence, read N- to C-terminus: MANQDLIPVVVNGAAGKMGREVIKAVAQAPDLQLVGAVDHNPSLQGQDIGEVVGIAPLEVPVLADLQSVLVLATQEKIQGVMVDFTHPSGVYDNVRSAIAYGVRPVVGTTGLSEQQIQDLGDFAEKASTGCLIAPNFAIGVLLMQQAAVQACQYFDHVEIIELHHNQKADAPSGTAIKTAQMLAEMGKTFNPPAVEEKETIAGAKGGLGPGQIPIHSIRLPGLIAHQEVLFGSPGQLYTIRHDTTDRACYMPGVLLGIRKVVELKGLVYGLEKLL.

Residues 13–18 (GAAGKM), 108–110 (GTT), and 134–137 (APNF) each bind NAD(+). His-164 serves as the catalytic Proton donor/acceptor. His-165 is a (S)-2,3,4,5-tetrahydrodipicolinate binding site. Lys-168 functions as the Proton donor in the catalytic mechanism. 174–175 (GT) contacts (S)-2,3,4,5-tetrahydrodipicolinate.

The protein belongs to the DapB family.

The protein resides in the cytoplasm. The catalysed reaction is (S)-2,3,4,5-tetrahydrodipicolinate + NAD(+) + H2O = (2S,4S)-4-hydroxy-2,3,4,5-tetrahydrodipicolinate + NADH + H(+). The enzyme catalyses (S)-2,3,4,5-tetrahydrodipicolinate + NADP(+) + H2O = (2S,4S)-4-hydroxy-2,3,4,5-tetrahydrodipicolinate + NADPH + H(+). It participates in amino-acid biosynthesis; L-lysine biosynthesis via DAP pathway; (S)-tetrahydrodipicolinate from L-aspartate: step 4/4. Its function is as follows. Catalyzes the conversion of 4-hydroxy-tetrahydrodipicolinate (HTPA) to tetrahydrodipicolinate. The protein is 4-hydroxy-tetrahydrodipicolinate reductase of Synechocystis sp. (strain ATCC 27184 / PCC 6803 / Kazusa).